The chain runs to 211 residues: Uracil phosphoribosyltransferase (211 aa).

5-phospho-alpha-D-ribose 1-diphosphate is bound by residues Arg81, Arg106, and 133-141 (DPMLATGNS). Uracil contacts are provided by residues Ile196 and 201 to 203 (GDA). Position 202 (Asp202) interacts with 5-phospho-alpha-D-ribose 1-diphosphate.

It belongs to the UPRTase family. Mg(2+) is required as a cofactor.

The enzyme catalyses UMP + diphosphate = 5-phospho-alpha-D-ribose 1-diphosphate + uracil. The protein operates within pyrimidine metabolism; UMP biosynthesis via salvage pathway; UMP from uracil: step 1/1. With respect to regulation, allosterically activated by GTP. Catalyzes the conversion of uracil and 5-phospho-alpha-D-ribose 1-diphosphate (PRPP) to UMP and diphosphate. This is Uracil phosphoribosyltransferase from Paracoccus denitrificans (strain Pd 1222).